Reading from the N-terminus, the 232-residue chain is 2,3-bisphosphoglycerate-dependent phosphoglycerate mutase (232 aa).

Residues 8-15 (RHGESLWN), 21-22 (TG), Arg60, 87-90 (ERHY), Lys98, 114-115 (RR), and 183-184 (GN) each bind substrate. The Tele-phosphohistidine intermediate role is filled by His9. Catalysis depends on Glu87, which acts as the Proton donor/acceptor.

It belongs to the phosphoglycerate mutase family. BPG-dependent PGAM subfamily.

The enzyme catalyses (2R)-2-phosphoglycerate = (2R)-3-phosphoglycerate. It participates in carbohydrate degradation; glycolysis; pyruvate from D-glyceraldehyde 3-phosphate: step 3/5. In terms of biological role, catalyzes the interconversion of 2-phosphoglycerate and 3-phosphoglycerate. The polypeptide is 2,3-bisphosphoglycerate-dependent phosphoglycerate mutase (Clostridium beijerinckii (strain ATCC 51743 / NCIMB 8052) (Clostridium acetobutylicum)).